Here is a 100-residue protein sequence, read N- to C-terminus: Small ribosomal subunit protein uS14c (100 aa).

The protein belongs to the universal ribosomal protein uS14 family. In terms of assembly, part of the 30S ribosomal subunit.

Its subcellular location is the plastid. The protein resides in the chloroplast. Binds 16S rRNA, required for the assembly of 30S particles. The protein is Small ribosomal subunit protein uS14c of Populus alba (White poplar).